A 963-amino-acid chain; its full sequence is VPS35 endosomal protein-sorting factor-like (963 aa).

Disordered stretches follow at residues 38–71 (ITVT…PLSS) and 85–111 (ASET…EEEV). Low complexity predominate over residues 52–63 (GSTSSSSSSSSS).

Belongs to the VPS35L family. In terms of assembly, component of the heterotrimeric retriever complex.

Its subcellular location is the endosome. Acts as a component of the retriever complex. The retriever complex is a heterotrimeric complex related to retromer cargo-selective complex (CSC) and essential for retromer-independent retrieval and recycling of numerous cargos such as integrins. The recruitment of the retriever complex to the endosomal membrane involves CCC and WASH complexes. In the endosomes, drives the retrieval and recycling of NxxY-motif-containing cargo proteins by coupling to SNX17, a cargo essential for the homeostatic maintenance of numerous cell surface proteins associated with processes that include cell migration, cell adhesion, nutrient supply and cell signaling. May be involved in copper-dependent atp7a trafficking between the trans-Golgi network and vesicles in the cell periphery. In Danio rerio (Zebrafish), this protein is VPS35 endosomal protein-sorting factor-like (vps35l).